We begin with the raw amino-acid sequence, 362 residues long: Hepatic sodium/bile acid cotransporter (362 aa).

Residues Met-1–Ala-22 lie on the Extracellular side of the membrane. Residues Asn-5 and Asn-11 are each glycosylated (N-linked (GlcNAc...) asparagine). A helical membrane pass occupies residues Thr-23–Cys-44. The Cytoplasmic segment spans residues Thr-45 to Glu-47. Residues Phe-48–Phe-83 form a helical membrane-spanning segment. The Extracellular segment spans residues His-84–Ser-86. A discontinuously helical transmembrane segment spans residues Asn-87–Met-112. Over Lys-113–Asp-115 the chain is Cytoplasmic. The helical transmembrane segment at Met-116–Ser-142 threads the bilayer. The Extracellular segment spans residues Lys-143–Tyr-156. A helical membrane pass occupies residues Lys-157–Lys-179. The Cytoplasmic segment spans residues Arg-180–Tyr-183. The chain crosses the membrane as a helical span at residues Val-184–Val-217. Topologically, residues Met-218–Thr-219 are extracellular. A helical transmembrane segment spans residues Pro-220 to Leu-243. The Cytoplasmic portion of the chain corresponds to Phe-244–Asn-247. A discontinuously helical transmembrane segment spans residues Pro-248–Thr-273. Over Phe-274–Gly-280 the chain is Extracellular. Residues Pro-281 to Lys-311 traverse the membrane as a helical segment. Residues Pro-312–Asn-362 are Cytoplasmic-facing. A Phosphothreonine modification is found at Thr-330. Positions Ala-333–Asn-362 are disordered. Positions Asn-353–Asn-362 are enriched in polar residues.

The protein belongs to the bile acid:sodium symporter (BASS) (TC 2.A.28) family. In terms of tissue distribution, highly expressed in liver and low expression in kidney.

The protein localises to the cell membrane. It carries out the reaction taurocholate(out) + 2 Na(+)(out) = taurocholate(in) + 2 Na(+)(in). It catalyses the reaction taurochenodeoxycholate(out) + 2 Na(+)(out) = taurochenodeoxycholate(in) + 2 Na(+)(in). The catalysed reaction is tauroursodeoxycholate(out) + 2 Na(+)(out) = tauroursodeoxycholate(in) + 2 Na(+)(in). The enzyme catalyses glycocholate(out) + 2 Na(+)(out) = glycocholate(in) + 2 Na(+)(in). It carries out the reaction estrone 3-sulfate(out) + 2 Na(+)(out) = estrone 3-sulfate(in) + 2 Na(+)(in). It catalyses the reaction cholate(out) + 2 Na(+)(out) = cholate(in) + 2 Na(+)(in). The catalysed reaction is tauronorcholate(out) + 2 Na(+)(out) = tauronorcholate(in) + 2 Na(+)(in). The enzyme catalyses taurodeoxycholate(out) + 2 Na(+)(out) = taurodeoxycholate(in) + 2 Na(+)(in). It carries out the reaction tauroallocholate(out) + 2 Na(+)(out) = tauroallocholate(in) + 2 Na(+)(in). It catalyses the reaction taurohyodeoxycholate(out) + 2 Na(+)(out) = taurohyodeoxycholate(in) + 2 Na(+)(in). The catalysed reaction is taurohyocholate(out) + 2 Na(+)(out) = taurohyocholate(in) + 2 Na(+)(in). The enzyme catalyses tauro-beta-muricholate(out) + 2 Na(+)(out) = tauro-beta-muricholate(in) + 2 Na(+)(in). The transport of bile acids is sodium-dependent. As a major transporter of conjugated bile salts from plasma into the hepatocyte, it plays a key role in the enterohepatic circulation of bile salts necessary for the solubilization and absorption of dietary fat and fat-soluble vitamins. It is strictly dependent on the extracellular presence of sodium. It exhibits broad substrate specificity and transports various bile acids, such as taurocholate, cholate, as well as non-bile acid organic compounds, such as estrone sulfate. Works collaboratively with the ileal transporter (NTCP2), the organic solute transporter (OST), and the bile salt export pump (BSEP), to ensure efficacious biological recycling of bile acids during enterohepatic circulation. This is Hepatic sodium/bile acid cotransporter (Slc10a1) from Rattus norvegicus (Rat).